Reading from the N-terminus, the 409-residue chain is Failed axon connections homolog (409 aa).

Residues 68–88 (YLTGGALLAAAAYLLHELLVI) traverse the membrane as a helical segment. The segment at 372–409 (DEGAENSFSRTPDTDFTGHSLFDSDVDMDDYTDHEQCK) is disordered.

This sequence belongs to the FAX family.

The protein localises to the membrane. Its function is as follows. May play a role in axonal development. The polypeptide is Failed axon connections homolog (FAXC) (Homo sapiens (Human)).